The following is a 496-amino-acid chain: Proline--tRNA ligase (496 aa).

It belongs to the class-II aminoacyl-tRNA synthetase family. ProS type 3 subfamily. Homodimer.

It localises to the cytoplasm. The enzyme catalyses tRNA(Pro) + L-proline + ATP = L-prolyl-tRNA(Pro) + AMP + diphosphate. Its function is as follows. Catalyzes the attachment of proline to tRNA(Pro) in a two-step reaction: proline is first activated by ATP to form Pro-AMP and then transferred to the acceptor end of tRNA(Pro). This Phocaeicola vulgatus (strain ATCC 8482 / DSM 1447 / JCM 5826 / CCUG 4940 / NBRC 14291 / NCTC 11154) (Bacteroides vulgatus) protein is Proline--tRNA ligase.